Here is a 179-residue protein sequence, read N- to C-terminus: B-cell acute lymphoblastic leukemia-expressed protein (179 aa).

Disordered regions lie at residues 1–20 (MMKD…TDLQ) and 65–86 (RDTP…RGKA). A compositionally biased stretch (polar residues) spans 10–20 (SWASEESTDLQ).

This chain is B-cell acute lymphoblastic leukemia-expressed protein (BLACE), found in Homo sapiens (Human).